Consider the following 712-residue polypeptide: Anaerobic ribonucleoside-triphosphate reductase (712 aa).

An ATP-cone domain is found at 3-92; it reads PHVMKRDGCK…EYRHDRDIER (90 aa). Residues 583-708 form the Glycine radical domain; sequence KKVNPYDKID…VKRRVKHLGN (126 aa). Zn(2+)-binding residues include C644, C647, C662, and C665. G681 is modified (glycine radical).

Belongs to the anaerobic ribonucleoside-triphosphate reductase family. Homodimer. Forms a tetramer composed of two NrdD and two NrdG subunits.

It catalyses the reaction a ribonucleoside 5'-triphosphate + formate + H(+) = a 2'-deoxyribonucleoside 5'-triphosphate + CO2 + H2O. It carries out the reaction formate + ATP + H(+) = dATP + CO2 + H2O. The catalysed reaction is CTP + formate + H(+) = dCTP + CO2 + H2O. The enzyme catalyses GTP + formate + H(+) = dGTP + CO2 + H2O. It catalyses the reaction UTP + formate + H(+) = dUTP + CO2 + H2O. With respect to regulation, activated under anaerobic conditions by NrdG, a tightly associated activase. Activation involves the formation of a glycyl radical at Gly-681. Exposure of the activated reductase to oxygen leads to C-terminal truncation and inactivation of the protein, by cleavage at the N-terminal side of Gly-681. The presence of zinc protects the protein from proteolysis and prevents the formation of disulfide bridges within it. The enzyme shows a basal activity in the absence of any effector, but reduction is stimulated up to 10-fold by an appropriate modulator (dGTP for ATP reduction, ATP for CTP and UTP reduction, and dTTP for GTP reduction). dGTP and dTTP inhibit the reduction of the incorrect substrate, and dATP inhibits reduction of all four. These modulators act as allosteric effectors. In terms of biological role, catalyzes the conversion of ribonucleotides into deoxyribonucleotides, which are required for DNA synthesis and repair. Can reduce each of the four common ribonucleoside triphosphates. The chain is Anaerobic ribonucleoside-triphosphate reductase from Escherichia coli (strain K12).